A 255-amino-acid chain; its full sequence is Thiazole synthase (255 aa).

Lysine 96 serves as the catalytic Schiff-base intermediate with DXP. 1-deoxy-D-xylulose 5-phosphate contacts are provided by residues glycine 157, 183 to 184, and 205 to 206; these read AG and NT.

It belongs to the ThiG family. Homotetramer. Forms heterodimers with either ThiH or ThiS.

It localises to the cytoplasm. It carries out the reaction [ThiS sulfur-carrier protein]-C-terminal-Gly-aminoethanethioate + 2-iminoacetate + 1-deoxy-D-xylulose 5-phosphate = [ThiS sulfur-carrier protein]-C-terminal Gly-Gly + 2-[(2R,5Z)-2-carboxy-4-methylthiazol-5(2H)-ylidene]ethyl phosphate + 2 H2O + H(+). Its pathway is cofactor biosynthesis; thiamine diphosphate biosynthesis. Catalyzes the rearrangement of 1-deoxy-D-xylulose 5-phosphate (DXP) to produce the thiazole phosphate moiety of thiamine. Sulfur is provided by the thiocarboxylate moiety of the carrier protein ThiS. In vitro, sulfur can be provided by H(2)S. The sequence is that of Thiazole synthase from Staphylococcus epidermidis (strain ATCC 35984 / DSM 28319 / BCRC 17069 / CCUG 31568 / BM 3577 / RP62A).